A 158-amino-acid chain; its full sequence is 2-C-methyl-D-erythritol 2,4-cyclodiphosphate synthase (158 aa).

A divalent metal cation is bound by residues aspartate 9 and histidine 11. 4-CDP-2-C-methyl-D-erythritol 2-phosphate contacts are provided by residues 9–11 and 35–36; these read DVH and HS. Histidine 43 lines the a divalent metal cation pocket. 4-CDP-2-C-methyl-D-erythritol 2-phosphate-binding positions include 57–59, 62–66, 101–107, 133–136, phenylalanine 140, and arginine 143; these read DIG, FPDTD, AQAPKMA, and TTTE.

This sequence belongs to the IspF family. As to quaternary structure, homotrimer. A divalent metal cation is required as a cofactor.

The catalysed reaction is 4-CDP-2-C-methyl-D-erythritol 2-phosphate = 2-C-methyl-D-erythritol 2,4-cyclic diphosphate + CMP. It participates in isoprenoid biosynthesis; isopentenyl diphosphate biosynthesis via DXP pathway; isopentenyl diphosphate from 1-deoxy-D-xylulose 5-phosphate: step 4/6. In terms of biological role, involved in the biosynthesis of isopentenyl diphosphate (IPP) and dimethylallyl diphosphate (DMAPP), two major building blocks of isoprenoid compounds. Catalyzes the conversion of 4-diphosphocytidyl-2-C-methyl-D-erythritol 2-phosphate (CDP-ME2P) to 2-C-methyl-D-erythritol 2,4-cyclodiphosphate (ME-CPP) with a corresponding release of cytidine 5-monophosphate (CMP). In Vibrio vulnificus (strain YJ016), this protein is 2-C-methyl-D-erythritol 2,4-cyclodiphosphate synthase.